Here is a 118-residue protein sequence, read N- to C-terminus: SPbeta prophage-derived uncharacterized protein YolB (118 aa).

This is SPbeta prophage-derived uncharacterized protein YolB (yolB) from Bacillus subtilis (strain 168).